Reading from the N-terminus, the 485-residue chain is Glutamate--tRNA ligase (485 aa).

A 'HIGH' region motif is present at residues 10–20 (PSPTGHLHIGN). A 'KMSKS' region motif is present at residues 253 to 257 (KLSKR). Position 256 (Lys256) interacts with ATP.

It belongs to the class-I aminoacyl-tRNA synthetase family. Glutamate--tRNA ligase type 1 subfamily. In terms of assembly, monomer.

It is found in the cytoplasm. The catalysed reaction is tRNA(Glu) + L-glutamate + ATP = L-glutamyl-tRNA(Glu) + AMP + diphosphate. Catalyzes the attachment of glutamate to tRNA(Glu) in a two-step reaction: glutamate is first activated by ATP to form Glu-AMP and then transferred to the acceptor end of tRNA(Glu). This is Glutamate--tRNA ligase from Enterococcus faecalis (strain ATCC 700802 / V583).